The primary structure comprises 894 residues: Translation factor GUF1 homolog, mitochondrial (894 aa).

Residues 157–189 (EDEGLDGGPPPGMEAKKSSSSSSSNNVHSNCSD) are disordered. Positions 174-188 (SSSSSSSNNVHSNCS) are enriched in low complexity. The 178-residue stretch at 199–376 (ENIRNFCILA…RIVSEIPSPA (178 aa)) folds into the tr-type G domain. Residues 208 to 215 (AHIDSGKS), 269 to 273 (DTPGH), and 323 to 326 (NKID) each bind GTP. Residues 649-674 (DHDDCNDNGGSNSDDRSDRSGKNPPD) are disordered.

Belongs to the TRAFAC class translation factor GTPase superfamily. Classic translation factor GTPase family. LepA subfamily.

It is found in the mitochondrion inner membrane. The catalysed reaction is GTP + H2O = GDP + phosphate + H(+). Promotes mitochondrial protein synthesis. May act as a fidelity factor of the translation reaction, by catalyzing a one-codon backward translocation of tRNAs on improperly translocated ribosomes. Binds to mitochondrial ribosomes in a GTP-dependent manner. The sequence is that of Translation factor GUF1 homolog, mitochondrial from Plasmodium knowlesi (strain H).